The primary structure comprises 188 residues: dCTP deaminase (188 aa).

DCTP contacts are provided by residues 111–116 (KSTYAR), 135–137 (TLE), Gln-156, Tyr-170, and Gln-180. Residue Glu-137 is the Proton donor/acceptor of the active site.

The protein belongs to the dCTP deaminase family. As to quaternary structure, homotrimer.

The catalysed reaction is dCTP + H2O + H(+) = dUTP + NH4(+). The protein operates within pyrimidine metabolism; dUMP biosynthesis; dUMP from dCTP (dUTP route): step 1/2. Catalyzes the deamination of dCTP to dUTP. This is dCTP deaminase from Cupriavidus necator (strain ATCC 17699 / DSM 428 / KCTC 22496 / NCIMB 10442 / H16 / Stanier 337) (Ralstonia eutropha).